Here is a 154-residue protein sequence, read N- to C-terminus: Transcriptional repressor NrdR (154 aa).

A zinc finger lies at 3-34 (CPFCRHPDSRVVDSRETDEGQAIRRRRSCPEC). Residues 46–136 (LAVVKRSGVT…VYRSFESAAD (91 aa)) form the ATP-cone domain.

The protein belongs to the NrdR family. Zn(2+) is required as a cofactor.

Functionally, negatively regulates transcription of bacterial ribonucleotide reductase nrd genes and operons by binding to NrdR-boxes. In Mycobacterium sp. (strain JLS), this protein is Transcriptional repressor NrdR.